An 885-amino-acid chain; its full sequence is High affinity cAMP-specific and IBMX-insensitive 3',5'-cyclic phosphodiesterase 8B (885 aa).

Disordered regions lie at residues 18-41 and 72-95; these read RDSD…APLP and TELG…GRRR. Residues 23–34 show a composition bias toward polar residues; the sequence is SSSPRQTTSVSQ. Positions 75-90 are enriched in low complexity; it reads GSGSSAGSAAPAATTS. The PAS domain occupies 267–338; the sequence is ACNSVFTALD…DTINTCIKKG (72 aa). The interval 393 to 436 is disordered; it reads IHRDSGDNSQTEPHSFRYKNRRKESIDVKSISSRGSDAPSLQNR. Residues 422 to 436 are compositionally biased toward polar residues; sequence SISSRGSDAPSLQNR. Ser517 bears the Phosphoserine mark. Residues 539 to 875 form the PDEase domain; that stretch reads TINDVPPCIS…KHWKTLDDLK (337 aa). The Proton donor role is filled by His615. The a divalent metal cation site is built by His619, His655, and Asp656. Position 754 is a phosphoserine (Ser754). Asp781 contributes to the a divalent metal cation binding site.

The protein belongs to the cyclic nucleotide phosphodiesterase family. PDE8 subfamily. Requires a divalent metal cation as cofactor. As to expression, abundantly expressed in the thyroid. Also very weakly expressed in brain, spinal cord and placenta. In the thyroid isoform 1 predominates, and isoforms 2 and 6 are also highly expressed. In the placenta isoforms 1 and 2 are expressed equally. In the brain isoform 2 predominates.

The catalysed reaction is 3',5'-cyclic AMP + H2O = AMP + H(+). It functions in the pathway purine metabolism; 3',5'-cyclic AMP degradation; AMP from 3',5'-cyclic AMP: step 1/1. Inhibited by dipyridimole. Insensitive to selective PDE inhibitors including rolipram and milrinone as well as to the non-selective inhibitor, IBMX. Unaffected by cGMP. Its function is as follows. Hydrolyzes the second messenger cAMP, which is a key regulator of many important physiological processes. May be involved in specific signaling in the thyroid gland. The polypeptide is High affinity cAMP-specific and IBMX-insensitive 3',5'-cyclic phosphodiesterase 8B (PDE8B) (Homo sapiens (Human)).